Consider the following 398-residue polypeptide: Phosphoglycerate kinase (398 aa).

Substrate-binding positions include 21-23, arginine 36, 59-62, arginine 119, and arginine 157; these read DFN and HLGR. ATP-binding positions include lysine 208, glycine 296, glutamate 327, and 354–357; that span reads GGDS.

Belongs to the phosphoglycerate kinase family. As to quaternary structure, monomer.

It is found in the cytoplasm. The enzyme catalyses (2R)-3-phosphoglycerate + ATP = (2R)-3-phospho-glyceroyl phosphate + ADP. The protein operates within carbohydrate degradation; glycolysis; pyruvate from D-glyceraldehyde 3-phosphate: step 2/5. The protein is Phosphoglycerate kinase of Streptococcus agalactiae serotype Ia (strain ATCC 27591 / A909 / CDC SS700).